The following is a 269-amino-acid chain: Small ribosomal subunit protein eS1 (269 aa).

The interval 1-20 (MAVGKNKGVSKGGKKGSKKK) is disordered.

It belongs to the eukaryotic ribosomal protein eS1 family. In terms of assembly, component of the small ribosomal subunit. Mature ribosomes consist of a small (40S) and a large (60S) subunit. The 40S subunit contains about 33 different proteins and 1 molecule of RNA (18S). The 60S subunit contains about 49 different proteins and 3 molecules of RNA (28S, 5.8S and 5S).

Its subcellular location is the cytoplasm. Has an essential role in oogenesis. The protein is Small ribosomal subunit protein eS1 of Anopheles gambiae (African malaria mosquito).